The sequence spans 327 residues: Ferrochelatase 2 (327 aa).

Fe cation is bound by residues His-201 and Glu-282.

Belongs to the ferrochelatase family.

The protein localises to the cytoplasm. It carries out the reaction heme b + 2 H(+) = protoporphyrin IX + Fe(2+). It functions in the pathway porphyrin-containing compound metabolism; protoheme biosynthesis; protoheme from protoporphyrin-IX: step 1/1. Its function is as follows. Catalyzes the ferrous insertion into protoporphyrin IX. The polypeptide is Ferrochelatase 2 (Shewanella oneidensis (strain ATCC 700550 / JCM 31522 / CIP 106686 / LMG 19005 / NCIMB 14063 / MR-1)).